The following is a 267-amino-acid chain: 5'-nucleotidase SurE (267 aa).

4 residues coordinate a divalent metal cation: D9, D10, S40, and N97.

It belongs to the SurE nucleotidase family. A divalent metal cation serves as cofactor.

Its subcellular location is the cytoplasm. It catalyses the reaction a ribonucleoside 5'-phosphate + H2O = a ribonucleoside + phosphate. Functionally, nucleotidase that shows phosphatase activity on nucleoside 5'-monophosphates. In Helicobacter pylori (strain J99 / ATCC 700824) (Campylobacter pylori J99), this protein is 5'-nucleotidase SurE.